The chain runs to 139 residues: Nucleoside diphosphate kinase (139 aa).

6 residues coordinate ATP: Lys10, Phe58, Arg86, Thr92, Arg103, and Asn113. Catalysis depends on His116, which acts as the Pros-phosphohistidine intermediate.

It belongs to the NDK family. In terms of assembly, homotetramer. It depends on Mg(2+) as a cofactor.

The protein localises to the cytoplasm. It catalyses the reaction a 2'-deoxyribonucleoside 5'-diphosphate + ATP = a 2'-deoxyribonucleoside 5'-triphosphate + ADP. The enzyme catalyses a ribonucleoside 5'-diphosphate + ATP = a ribonucleoside 5'-triphosphate + ADP. In terms of biological role, major role in the synthesis of nucleoside triphosphates other than ATP. The ATP gamma phosphate is transferred to the NDP beta phosphate via a ping-pong mechanism, using a phosphorylated active-site intermediate. This Caulobacter vibrioides (strain ATCC 19089 / CIP 103742 / CB 15) (Caulobacter crescentus) protein is Nucleoside diphosphate kinase.